The primary structure comprises 540 residues: Phosphoenolpyruvate carboxykinase (ATP) (540 aa).

Arginine 65 contacts substrate. An N6-acetyllysine modification is found at lysine 87. 2 residues coordinate substrate: tyrosine 207 and lysine 213. Residues lysine 213, histidine 232, and 248–256 (GLSGTGKTT) contribute to the ATP site. Residues lysine 213 and histidine 232 each contribute to the Mn(2+) site. Residue aspartate 269 participates in Mn(2+) binding. Residues glutamate 297, arginine 333, 449–450 (RI), and threonine 455 each bind ATP. Position 333 (arginine 333) interacts with substrate. Position 523 is an N6-acetyllysine (lysine 523).

This sequence belongs to the phosphoenolpyruvate carboxykinase (ATP) family. Monomer. Mn(2+) is required as a cofactor.

It is found in the cytoplasm. The catalysed reaction is oxaloacetate + ATP = phosphoenolpyruvate + ADP + CO2. Its pathway is carbohydrate biosynthesis; gluconeogenesis. In terms of biological role, involved in the gluconeogenesis. Catalyzes the conversion of oxaloacetate (OAA) to phosphoenolpyruvate (PEP) through direct phosphoryl transfer between the nucleoside triphosphate and OAA. The chain is Phosphoenolpyruvate carboxykinase (ATP) from Escherichia coli O7:K1 (strain IAI39 / ExPEC).